Reading from the N-terminus, the 254-residue chain is Adenosine 5'-phosphosulfate reductase (254 aa).

4 residues coordinate [4Fe-4S] cluster: C140, C141, C223, and C226. Catalysis depends on C249, which acts as the Nucleophile; cysteine thiosulfonate intermediate.

It belongs to the PAPS reductase family. CysH subfamily. The cofactor is [4Fe-4S] cluster.

The protein localises to the cytoplasm. The catalysed reaction is [thioredoxin]-disulfide + sulfite + AMP + 2 H(+) = adenosine 5'-phosphosulfate + [thioredoxin]-dithiol. It participates in sulfur metabolism; hydrogen sulfide biosynthesis; sulfite from sulfate. Functionally, catalyzes the formation of sulfite from adenosine 5'-phosphosulfate (APS) using thioredoxin as an electron donor. The polypeptide is Adenosine 5'-phosphosulfate reductase (Mycobacterium bovis (strain ATCC BAA-935 / AF2122/97)).